The chain runs to 864 residues: Probable M1 family aminopeptidase 1 (864 aa).

Residues Glu149 and 289 to 293 (GAMEN) contribute to the substrate site. His325 contributes to the Zn(2+) binding site. Glu326 (proton acceptor) is an active-site residue. 2 residues coordinate Zn(2+): His329 and Glu348.

Belongs to the peptidase M1 family. It depends on Zn(2+) as a cofactor.

The sequence is that of Probable M1 family aminopeptidase 1 from Encephalitozoon cuniculi (strain GB-M1) (Microsporidian parasite).